The chain runs to 781 residues: Acyl-CoA dehydrogenase family member 11 (781 aa).

N6-acetyllysine is present on K177. Y325 carries the phosphotyrosine modification. K392 is modified (N6-succinyllysine). FAD contacts are provided by residues 505 to 515, 513 to 515, 539 to 541, and S541; these read FCMTEPDVASS, ASS, and WSS. S515 serves as a coordination point for substrate. Position 630–633 (630–633) interacts with substrate; that stretch reads GPGR. Residues R658, Q728, and 728–732 contribute to the FAD site; that span reads QVCGG. G756 is a substrate binding site. Residues 757–759 and E759 contribute to the FAD site; that span reads PDE.

It belongs to the acyl-CoA dehydrogenase family. Homodimer. It depends on FAD as a cofactor.

Its subcellular location is the peroxisome. The protein localises to the mitochondrion membrane. The enzyme catalyses a 2,3-saturated acyl-CoA + oxidized [electron-transfer flavoprotein] + H(+) = a (2E)-enoyl-CoA + reduced [electron-transfer flavoprotein]. It carries out the reaction docosanoyl-CoA + oxidized [electron-transfer flavoprotein] + H(+) = (2E)-docosenoyl-CoA + reduced [electron-transfer flavoprotein]. The catalysed reaction is tetracosanoyl-CoA + oxidized [electron-transfer flavoprotein] + H(+) = (2E)-tetracosenoyl-CoA + reduced [electron-transfer flavoprotein]. It catalyses the reaction eicosanoyl-CoA + oxidized [electron-transfer flavoprotein] + H(+) = (2E)-eicosenoyl-CoA + reduced [electron-transfer flavoprotein]. The enzyme catalyses hexacosanoyl-CoA + oxidized [electron-transfer flavoprotein] + H(+) = (2E)-hexacosenoyl-CoA + reduced [electron-transfer flavoprotein]. It carries out the reaction tricosanoyl-CoA + oxidized [electron-transfer flavoprotein] + H(+) = (2E)-tricosenoyl-CoA + reduced [electron-transfer flavoprotein]. Its pathway is lipid metabolism; fatty acid beta-oxidation. Acyl-CoA dehydrogenase, that exhibits maximal activity towards saturated C22-CoA. Probably participates in beta-oxydation and energy production but could also play a role in the metabolism of specific fatty acids to control fatty acids composition of cellular lipids in brain. In Pongo abelii (Sumatran orangutan), this protein is Acyl-CoA dehydrogenase family member 11 (ACAD11).